Here is a 143-residue protein sequence, read N- to C-terminus: D-aminoacyl-tRNA deacylase (143 aa).

The Gly-cisPro motif, important for rejection of L-amino acids signature appears at 135 to 136; sequence GP.

This sequence belongs to the DTD family. As to quaternary structure, homodimer.

It is found in the cytoplasm. The catalysed reaction is glycyl-tRNA(Ala) + H2O = tRNA(Ala) + glycine + H(+). The enzyme catalyses a D-aminoacyl-tRNA + H2O = a tRNA + a D-alpha-amino acid + H(+). Functionally, an aminoacyl-tRNA editing enzyme that deacylates mischarged D-aminoacyl-tRNAs. Also deacylates mischarged glycyl-tRNA(Ala), protecting cells against glycine mischarging by AlaRS. Acts via tRNA-based rather than protein-based catalysis; rejects L-amino acids rather than detecting D-amino acids in the active site. By recycling D-aminoacyl-tRNA to D-amino acids and free tRNA molecules, this enzyme counteracts the toxicity associated with the formation of D-aminoacyl-tRNA entities in vivo and helps enforce protein L-homochirality. This Mycolicibacterium paratuberculosis (strain ATCC BAA-968 / K-10) (Mycobacterium paratuberculosis) protein is D-aminoacyl-tRNA deacylase.